The chain runs to 236 residues: tRNA (guanine-N(7)-)-methyltransferase (236 aa).

S-adenosyl-L-methionine contacts are provided by aspartate 35, glutamate 60, asparagine 87, and aspartate 113. Aspartate 113 is a catalytic residue. Substrate contacts are provided by lysine 117 and aspartate 149.

This sequence belongs to the class I-like SAM-binding methyltransferase superfamily. TrmB family.

The enzyme catalyses guanosine(46) in tRNA + S-adenosyl-L-methionine = N(7)-methylguanosine(46) in tRNA + S-adenosyl-L-homocysteine. It functions in the pathway tRNA modification; N(7)-methylguanine-tRNA biosynthesis. Catalyzes the formation of N(7)-methylguanine at position 46 (m7G46) in tRNA. This Prochlorococcus marinus (strain MIT 9313) protein is tRNA (guanine-N(7)-)-methyltransferase.